A 503-amino-acid chain; its full sequence is Lysine--tRNA ligase (503 aa).

Mg(2+) is bound by residues E410 and E417.

It belongs to the class-II aminoacyl-tRNA synthetase family. As to quaternary structure, homodimer. Requires Mg(2+) as cofactor.

The protein resides in the cytoplasm. It catalyses the reaction tRNA(Lys) + L-lysine + ATP = L-lysyl-tRNA(Lys) + AMP + diphosphate. The chain is Lysine--tRNA ligase from Prochlorococcus marinus (strain MIT 9211).